An 883-amino-acid chain; its full sequence is Sodium/sulfate cotransporter 2 (883 aa).

6 helical membrane passes run 3-23, 30-50, 60-80, 106-126, 139-159, and 185-205; these read FGWQ…VMAA, VTFT…VTVA, GLLT…TGGL, MCLS…PILI, LLIP…IGTS, and IFDI…FILL. RCK C-terminal domains follow at residues 211–295, 317–401, 406–491, and 497–583; these read LPGN…EFGL, VFTP…SKNN, VRAV…FPGL, and EQVD…DKSF. The next 6 membrane-spanning stretches (helical) occupy residues 600 to 620, 624 to 644, 657 to 677, 693 to 713, 774 to 794, and 802 to 822; these read MVIG…GGLK, YIHL…TGCM, VYLT…TGVA, SDGA…ELLT, FAII…FILC, and VWIV…LYFL. A disordered region spans residues 857-883; that stretch reads QASRTGSDGTGSSDSPRALGVPKVITA. Residues 861 to 871 are compositionally biased toward low complexity; the sequence is TGSDGTGSSDS.

This sequence belongs to the divalent anion:Na+ symporter (DASS) superfamily. Na+/sulfate symporter (TC 2.A.47.4) family.

It localises to the cell membrane. Na(+)/sulfate cotransporter with a probable high-affinity for sulfate and a proteasome dependent turnover. The sequence is that of Sodium/sulfate cotransporter 2 (SLT2) from Chlamydomonas reinhardtii (Chlamydomonas smithii).